A 305-amino-acid polypeptide reads, in one-letter code: Sulfate adenylyltransferase subunit 2 (305 aa).

It belongs to the PAPS reductase family. CysD subfamily. As to quaternary structure, heterodimer composed of CysD, the smaller subunit, and CysN.

It carries out the reaction sulfate + ATP + H(+) = adenosine 5'-phosphosulfate + diphosphate. The protein operates within sulfur metabolism; hydrogen sulfide biosynthesis; sulfite from sulfate: step 1/3. Functionally, with CysN forms the ATP sulfurylase (ATPS) that catalyzes the adenylation of sulfate producing adenosine 5'-phosphosulfate (APS) and diphosphate, the first enzymatic step in sulfur assimilation pathway. APS synthesis involves the formation of a high-energy phosphoric-sulfuric acid anhydride bond driven by GTP hydrolysis by CysN coupled to ATP hydrolysis by CysD. The polypeptide is Sulfate adenylyltransferase subunit 2 (Pseudomonas entomophila (strain L48)).